Reading from the N-terminus, the 212-residue chain is Protein-L-isoaspartate O-methyltransferase 1 (212 aa).

Residue Ser60 is part of the active site.

The protein belongs to the methyltransferase superfamily. L-isoaspartyl/D-aspartyl protein methyltransferase family.

Its subcellular location is the cytoplasm. It catalyses the reaction [protein]-L-isoaspartate + S-adenosyl-L-methionine = [protein]-L-isoaspartate alpha-methyl ester + S-adenosyl-L-homocysteine. In terms of biological role, catalyzes the methyl esterification of L-isoaspartyl residues in peptides and proteins that result from spontaneous decomposition of normal L-aspartyl and L-asparaginyl residues. It plays a role in the repair and/or degradation of damaged proteins. The sequence is that of Protein-L-isoaspartate O-methyltransferase 1 from Anaeromyxobacter sp. (strain Fw109-5).